A 608-amino-acid chain; its full sequence is DNA mismatch repair protein MutL (608 aa).

The protein belongs to the DNA mismatch repair MutL/HexB family.

Functionally, this protein is involved in the repair of mismatches in DNA. It is required for dam-dependent methyl-directed DNA mismatch repair. May act as a 'molecular matchmaker', a protein that promotes the formation of a stable complex between two or more DNA-binding proteins in an ATP-dependent manner without itself being part of a final effector complex. This is DNA mismatch repair protein MutL from Anaeromyxobacter dehalogenans (strain 2CP-C).